Consider the following 277-residue polypeptide: Uracil phosphoribosyltransferase homolog (277 aa).

The interval 1–69 (MEAMPCHNQR…AAAPSPAAED (69 aa)) is disordered. Over residues 37 to 69 (AEPSEGSSSGSPSPDSSSGSNGAAAAPSPAAED) the composition is skewed to low complexity. Residues Arg101, Arg110, and 144-147 (EKGN) each bind GTP. Arg154 serves as a coordination point for 5-phospho-alpha-D-ribose 1-diphosphate. GTP is bound by residues Arg171 and Arg200. 206 to 214 (YPILSTGNT) contributes to the 5-phospho-alpha-D-ribose 1-diphosphate binding site. 267–269 (THF) contacts uracil.

It belongs to the UPRTase family.

It is found in the cytoplasm. It localises to the nucleus. In Gallus gallus (Chicken), this protein is Uracil phosphoribosyltransferase homolog (UPRT).